We begin with the raw amino-acid sequence, 1342 residues long: DNA-directed RNA polymerase subunit beta (1342 aa).

This sequence belongs to the RNA polymerase beta chain family. The RNAP catalytic core consists of 2 alpha, 1 beta, 1 beta' and 1 omega subunit. When a sigma factor is associated with the core the holoenzyme is formed, which can initiate transcription.

It catalyses the reaction RNA(n) + a ribonucleoside 5'-triphosphate = RNA(n+1) + diphosphate. DNA-dependent RNA polymerase catalyzes the transcription of DNA into RNA using the four ribonucleoside triphosphates as substrates. In Pectobacterium carotovorum subsp. carotovorum (strain PC1), this protein is DNA-directed RNA polymerase subunit beta.